Here is an 84-residue protein sequence, read N- to C-terminus: MKQEIQTGDITALSFEQALKQLEVIVENLERGDVPLEQSIDIYERGEALRKHCDRLLKAAEAKVEKIQLSEEGSPKGVEPLDSK.

The protein belongs to the XseB family. Heterooligomer composed of large and small subunits.

It is found in the cytoplasm. The enzyme catalyses Exonucleolytic cleavage in either 5'- to 3'- or 3'- to 5'-direction to yield nucleoside 5'-phosphates.. In terms of biological role, bidirectionally degrades single-stranded DNA into large acid-insoluble oligonucleotides, which are then degraded further into small acid-soluble oligonucleotides. The chain is Exodeoxyribonuclease 7 small subunit from Bartonella quintana (strain Toulouse) (Rochalimaea quintana).